Here is a 314-residue protein sequence, read N- to C-terminus: Probable UDP-sugar transporter protein SLC35A4 (314 aa).

At 1 to 20 the chain is on the cytoplasmic side; sequence MIAISADESPESSSPALRLR. A helical transmembrane segment spans residues 21-41; it reads WLFLLLLLVLIYGSHAPLLSL. The Lumenal portion of the chain corresponds to 42 to 54; sequence CKTQAQIPFSASS. Residues 55-75 form a helical membrane-spanning segment; that stretch reads CVLLIETSKLFISFASLLASG. Over 76-88 the chain is Cytoplasmic; the sequence is SVSTLRISISMTT. The chain crosses the membrane as a helical span at residues 89–109; the sequence is ASPYAVPAVLYAFNNHLVVFM. Over 110–145 the chain is Lumenal; that stretch reads QAYMDPSSFQVLSNLKIASTALLYTSCLGKRLHRRQ. A helical membrane pass occupies residues 146 to 166; the sequence is WFAMGLLVSAGVSHSCFSYDL. At 167–175 the chain is on the cytoplasmic side; the sequence is EGKRETAVY. The chain crosses the membrane as a helical span at residues 176 to 196; it reads ITSWGLLLVLVYCFVSGLAAV. Residues 197–206 lie on the Lumenal side of the membrane; the sequence is YTERVLKSQR. The helical transmembrane segment at 207 to 227 threads the bilayer; sequence LPLSMQNLFLYTFGVVVNLAS. Residues 228–242 lie on the Cytoplasmic side of the membrane; that stretch reads HLSGGEQKGFFEGYS. Residues 243-263 form a helical membrane-spanning segment; that stretch reads AVVWVIVAGQVANGLLMSVVM. Topologically, residues 264-267 are lumenal; that stretch reads KHGT. A helical membrane pass occupies residues 268 to 290; the sequence is GITRLFVISSAMLVNAVLSWGIL. The Cytoplasmic portion of the chain corresponds to 291-314; the sequence is GVQLTGYFLFPVVLIGWAVYLYYT.

This sequence belongs to the nucleotide-sugar transporter family. SLC35A subfamily.

The protein localises to the golgi apparatus membrane. It carries out the reaction CDP-L-ribitol(in) + CDP(out) = CDP-L-ribitol(out) + CDP(in). Its function is as follows. Mediates the transport of CDP-ribitol. Does not exhibit CMP-sialic acid, UDP-galactose and UDP-N-acetylglucosamine transport activity. In Danio rerio (Zebrafish), this protein is Probable UDP-sugar transporter protein SLC35A4.